The chain runs to 186 residues: Threonylcarbamoyl-AMP synthase (186 aa).

Residues 2–186 (STEFEQAVAA…ARTGAVIRPS (185 aa)) enclose the YrdC-like domain.

The protein belongs to the SUA5 family. TsaC subfamily.

The protein resides in the cytoplasm. It carries out the reaction L-threonine + hydrogencarbonate + ATP = L-threonylcarbamoyladenylate + diphosphate + H2O. Functionally, required for the formation of a threonylcarbamoyl group on adenosine at position 37 (t(6)A37) in tRNAs that read codons beginning with adenine. Catalyzes the conversion of L-threonine, HCO(3)(-)/CO(2) and ATP to give threonylcarbamoyl-AMP (TC-AMP) as the acyladenylate intermediate, with the release of diphosphate. This is Threonylcarbamoyl-AMP synthase from Aeromonas salmonicida (strain A449).